The chain runs to 418 residues: Actin-related protein 3B (418 aa).

This sequence belongs to the actin family. ARP3 subfamily. Interacts with the Arp2/3 complex composed of ARP2, ARP3, ARPC1B, ARPC1B/p41-ARC, ARPC2/p34-ARC, ARPC3/p21-ARC, ARPC4/p20-ARC and ARPC5/p16-ARC.

It localises to the cytoplasm. The protein resides in the cytoskeleton. It is found in the cell projection. In terms of biological role, plays a role in the organization of the actin cytoskeleton. May function as ATP-binding component of the Arp2/3 complex which is involved in regulation of actin polymerization and together with an activating nucleation-promoting factor (NPF) mediates the formation of branched actin networks. May decrease the metastatic potential of tumors. This Mus musculus (Mouse) protein is Actin-related protein 3B (Actr3b).